Reading from the N-terminus, the 250-residue chain is Probable transcriptional regulatory protein RER_29220 (250 aa).

Belongs to the TACO1 family.

The protein resides in the cytoplasm. This chain is Probable transcriptional regulatory protein RER_29220, found in Rhodococcus erythropolis (strain PR4 / NBRC 100887).